The primary structure comprises 265 residues: Mlc titration factor A (265 aa).

The Zn(2+) site is built by His111, His148, His152, and Glu211.

It belongs to the MtfA family. As to quaternary structure, interacts with Mlc. The cofactor is Zn(2+).

The protein resides in the cytoplasm. Involved in the modulation of the activity of the glucose-phosphotransferase system (glucose-PTS). Interacts with the transcriptional repressor Mlc, preventing its interaction with DNA and leading to the modulation of expression of genes regulated by Mlc, including ptsG, which encodes the PTS system glucose-specific EIICB component. Functionally, shows zinc-dependent metallopeptidase activity. This chain is Mlc titration factor A, found in Escherichia coli O6:K15:H31 (strain 536 / UPEC).